The chain runs to 363 residues: Peptide chain release factor 1 (363 aa).

Gln237 is modified (N5-methylglutamine).

The protein belongs to the prokaryotic/mitochondrial release factor family. Post-translationally, methylated by PrmC. Methylation increases the termination efficiency of RF1.

It is found in the cytoplasm. Its function is as follows. Peptide chain release factor 1 directs the termination of translation in response to the peptide chain termination codons UAG and UAA. This Marinobacter nauticus (strain ATCC 700491 / DSM 11845 / VT8) (Marinobacter aquaeolei) protein is Peptide chain release factor 1.